A 160-amino-acid chain; its full sequence is Small ribosomal subunit protein uS7 (160 aa).

The protein belongs to the universal ribosomal protein uS7 family. In terms of assembly, part of the 30S ribosomal subunit. Contacts proteins S9 and S11.

One of the primary rRNA binding proteins, it binds directly to 16S rRNA where it nucleates assembly of the head domain of the 30S subunit. Is located at the subunit interface close to the decoding center, probably blocks exit of the E-site tRNA. The chain is Small ribosomal subunit protein uS7 from Ehrlichia ruminantium (strain Gardel).